We begin with the raw amino-acid sequence, 530 residues long: Alpha-(1,3)-fucosyltransferase 4 (530 aa).

2 disordered regions span residues 1-48 (MRRL…RAVP) and 66-113 (HLGG…TPAD). Topologically, residues 1–147 (MRRLWGAARK…GGRRRWRRGR (147 aa)) are cytoplasmic. A compositionally biased stretch (basic and acidic residues) spans 88–106 (ASGERQRRLEPQLQHESRC). The chain crosses the membrane as a helical; Signal-anchor for type II membrane protein span at residues 148-172 (GLPWTVCVLAAAGLTCTALITYACW). The Lumenal portion of the chain corresponds to 173–530 (GQLPPLPWAS…IRNLASWFER (358 aa)). Residues asparagine 216 and asparagine 315 are each glycosylated (N-linked (GlcNAc...) asparagine).

Belongs to the glycosyltransferase 10 family.

It is found in the golgi apparatus. Its subcellular location is the golgi stack membrane. It catalyses the reaction a beta-D-galactosyl-(1-&gt;4)-N-acetyl-beta-D-glucosaminyl derivative + GDP-beta-L-fucose = a beta-D-galactosyl-(1-&gt;4)-[alpha-L-fucosyl-(1-&gt;3)]-N-acetyl-beta-D-glucosaminyl derivative + GDP + H(+). It carries out the reaction an N-acetyl-alpha-neuraminyl-(2-&gt;3)-beta-D-galactosyl-(1-&gt;4)-N-acetyl-beta-D-glucosaminyl derivative + GDP-beta-L-fucose = an alpha-Neu5Ac-(2-&gt;3)-beta-D-Gal-(1-&gt;4)-[alpha-L-Fuc-(1-&gt;3)]-beta-D-GlcNAc derivative + GDP + H(+). The catalysed reaction is an alpha-Neu5Ac-(2-&gt;3)-beta-D-Gal-(1-&gt;4)-beta-D-GlcNAc-(1-&gt;3)-beta-D-Gal-(1-&gt;4)-beta-D-GlcNAc derivative + GDP-beta-L-fucose = an alpha-Neu5Ac-(2-&gt;3)-beta-D-Gal-(1-&gt;4)-beta-D-GlcNAc-(1-&gt;3)-beta-D-Gal-(1-&gt;4)-[alpha-L-Fuc-(1-&gt;3)]-beta-D-GlcNAc derivative + GDP + H(+). The enzyme catalyses an alpha-Neu5Ac-(2-&gt;3)-beta-D-Gal-(1-&gt;4)-beta-D-GlcNAc6S derivative + GDP-beta-L-fucose = an alpha-Neu5Ac-(2-&gt;3)-beta-D-Gal-(1-&gt;4)-[alpha-L-Fuc-(1-&gt;3)]-beta-D-GlcNAc6S derivative + GDP + H(+). It functions in the pathway protein modification; protein glycosylation. Catalyzes alpha(1-&gt;3) linkage of fucosyl moiety transferred from GDP-beta-L-fucose to N-acetyl glucosamine (GlcNAc) within type 2 lactosamine (LacNAc, Gal-beta(1-&gt;4)GlcNAc) glycan attached to N- or O-linked glycoproteins. Robustly fucosylates nonsialylated distal LacNAc unit of the polylactosamine chain to form Lewis X antigen (CD15), a glycan determinant known to mediate important cellular functions in development and immunity. Fucosylates with lower efficiency sialylated LacNAc acceptors to form sialyl Lewis X and 6-sulfo sialyl Lewis X determinants that serve as recognition epitopes for C-type lectins. Together with FUT7 contributes to SELE, SELL and SELP selectin ligand biosynthesis and selectin-dependent lymphocyte homing, leukocyte migration and blood leukocyte homeostasis. In a cell type specific manner, may also fucosylate the internal LacNAc unit of the polylactosamine chain to form VIM-2 antigen that serves as recognition epitope for SELE. The polypeptide is Alpha-(1,3)-fucosyltransferase 4 (FUT4) (Pan troglodytes (Chimpanzee)).